Here is a 141-residue protein sequence, read N- to C-terminus: Putative antiholin (141 aa).

Helical transmembrane passes span leucine 4 to tyrosine 24, phenylalanine 32 to valine 52, and valine 94 to isoleucine 114.

Interacts with holin; this interaction this interaction blocks the holin homomultimerization and delays the host cell lysis.

The protein localises to the host cell inner membrane. Its function is as follows. Involved in lysis inhibition. Interacts with and inhibits the holin thereby delaying the host cell lysis timing. This Enterobacteriaceae (Bacteriophage P2) protein is Putative antiholin (lysA).